The sequence spans 625 residues: Cytoskeleton-associated protein 2 (625 aa).

Composition is skewed to polar residues over residues 1-22 (MSTP…QSAF) and 107-128 (NELT…NQTL). 3 disordered regions span residues 1 to 27 (MSTP…EQRR), 104 to 138 (KPSN…DDPQ), and 153 to 173 (NSKK…VPKK). Basic and acidic residues predominate over residues 159 to 170 (VITEKPKHDANV). Serine 190 is modified (phosphoserine). 4 disordered regions span residues 195–237 (LQVK…SHMT), 259–282 (SQHN…VTVQ), 322–398 (RPAS…QNEQ), and 484–521 (SGKL…TPST). 2 stretches are compositionally biased toward basic and acidic residues: residues 359–373 (ETAE…EWKA) and 500–514 (DCEK…DPTS). Phosphothreonine occurs at positions 518 and 521. At serine 534 the chain carries Phosphoserine. A phosphothreonine mark is found at threonine 535 and threonine 536. Position 538 is a phosphotyrosine (tyrosine 538). Residue serine 541 is modified to Phosphoserine.

This sequence belongs to the CKAP2 family. Associates with alpha- and beta-tubulins.

It localises to the cytoplasm. It is found in the cytoskeleton. Possesses microtubule stabilizing properties. Involved in regulating aneuploidy, cell cycling, and cell death in a p53/TP53-dependent manner. This is Cytoskeleton-associated protein 2 (CKAP2) from Bos taurus (Bovine).